Reading from the N-terminus, the 370-residue chain is Protein commissureless 1 (370 aa).

The Extracellular portion of the chain corresponds to 1–136; sequence MISTTDYPTV…DADMHVIINY (136 aa). The tract at residues 108 to 131 is required for vesicular localization; the sequence is LRDRSEESGESSWWSQIFGDADMH. The chain crosses the membrane as a helical span at residues 137 to 157; it reads LWIGVVSSLVILSLVFILFSC. Residues 158–370 are Cytoplasmic-facing; that stretch reads YFYRKFRTWK…CASLVVVVAA (213 aa). 2 consecutive short sequence motifs (PY-motif) follow at residues 220-223 and 229-232; these read PPCY and LPSY. Residues 227 to 237 form an interaction with Nedd4 region; it reads TGLPSYDEALH. Positions 287–312 are disordered; it reads VEEDKADSSSSTSASASPSSSESSNL. Positions 294-312 are enriched in low complexity; it reads SSSSTSASASPSSSESSNL.

Belongs to the commissureless family. As to quaternary structure, interacts (probably via PY-motifs) with Nedd4 (via WW2 domain). Interacts with Robo. In terms of processing, ubiquitinated by Nedd4; which promotes endocytosis of the comm/robo complex and comm proteasomal degradation. Not ubiquitinated by Nedd4.

Its subcellular location is the cytoplasmic vesicle membrane. The protein resides in the cell membrane. Functionally, controls axon guidance across the CNS midline by preventing the delivery of Robo to the growth cone. This is Protein commissureless 1 from Drosophila melanogaster (Fruit fly).